We begin with the raw amino-acid sequence, 503 residues long: MSDRFVIWAPSMHNEPAAKCGYCHGNKGGNMDQLFALDSWAHRYMNKMDVVKIENCTIGSFVEHMDVATYDRMCNMGFRRSGKFLYKVDPLRNCCRLYTIRTAPQELNMTKELKKCISRFATRITSEDYCPAAVASSDFVGKIVNAEMNSKTFYTRFEPALYSEEKYHLFVKYQEKVHQDYNNSPKSFKRFLCDTPFGPEAVLGTQESWEQLNNWQRMKPGEKLKHMGPVHECYYYEGKLIAITVSDILPSGISSVYFIWDPDYSKWSLGKLSALRDLAIIQRTNLQYYYLGYYIEDCPKMNYKANYGAEVLDVCHSKYIPLKPIQDMISRGKLFVIGEEETKVTKELYLVDSETGRGEGFPTDNVVKYKNIAEEIYGVGGCAFKSANESALELKELYGIPYEEEDLDTIYHLKEHNGHAPNGIPNVVPGLLPLWELLDIMQSGKITDLEGRLFLFEIETEGIRPLINFYSEPPNVKKRICDVIRLFGFETCMKAVILYSEQM.

It belongs to the R-transferase family.

Its subcellular location is the cytoplasm. It carries out the reaction an N-terminal L-alpha-aminoacyl-[protein] + L-arginyl-tRNA(Arg) = an N-terminal L-arginyl-L-aminoacyl-[protein] + tRNA(Arg) + H(+). In terms of biological role, involved in the post-translational conjugation of arginine to the N-terminal aspartate or glutamate of a protein. This arginylation is required for degradation of the protein via the ubiquitin pathway. Does not arginylate cysteine residues. The sequence is that of Arginyl-tRNA--protein transferase 1 (ATE1) from Saccharomyces cerevisiae (strain ATCC 204508 / S288c) (Baker's yeast).